Reading from the N-terminus, the 156-residue chain is Tripartite terminase subunit 2 (156 aa).

Residues 1 to 37 form a disordered region; that stretch reads MYESENASEHHPELEDVFSENTGDSNPSMGSSDSTRS. Residues 19-37 show a composition bias toward polar residues; sequence SENTGDSNPSMGSSDSTRS.

Belongs to the herpesviridae TRM2 protein family. As to quaternary structure, associates with TRM1 and TRM3 to form the tripartite terminase complex.

The protein resides in the host nucleus. Component of the molecular motor that translocates viral genomic DNA in empty capsid during DNA packaging. Forms a tripartite terminase complex together with TRM1 and TRM3 in the host cytoplasm. Once the complex reaches the host nucleus, it interacts with the capsid portal vertex. This portal forms a ring in which genomic DNA is translocated into the capsid. This chain is Tripartite terminase subunit 2, found in Varicella-zoster virus (strain Dumas) (HHV-3).